Consider the following 295-residue polypeptide: Small ribosomal subunit protein uS2 (295 aa).

Ser-2 carries the post-translational modification N-acetylserine. Ser-43 bears the Phosphoserine mark. Lys-52 carries the N6-acetyllysine modification. An interaction with PPP1R16B region spans residues 54–113 (TWEKLLLAARAIVAIENPADVSVISSRNTGQRAVLKFAAATGATPIAGRFTPGTFTNQIQ). An N6-acetyllysine; alternate modification is found at Lys-89. A Glycyl lysine isopeptide (Lys-Gly) (interchain with G-Cter in SUMO2); alternate cross-link involves residue Lys-89. Thr-97 carries the post-translational modification Phosphothreonine. Laminin-binding regions lie at residues 161–180 (IPCNNKGAHSVGLMWWMLAR) and 205–229 (RDPEEIEKEEQAAAEKAVTKEEFQG). [DE]-W-[ST] repeat units lie at residues 230-232 (EWT), 247-249 (DWS), 266-268 (DWS), 275-277 (DWS), and 293-295 (EWS). Residues 242–295 (QPEVADWSEGVQVPSVPIQQFPTEDWSAQPTTEDWSAAPTAQATEWVGTTTEWS) form a laminin-binding region. The disordered stretch occupies residues 266 to 295 (DWSAQPTTEDWSAAPTAQATEWVGTTTEWS).

The protein belongs to the universal ribosomal protein uS2 family. As to quaternary structure, monomer (37LRP) and homodimer (67LR). Component of the small ribosomal subunit. Mature ribosomes consist of a small (40S) and a large (60S) subunit. The 40S subunit contains about 33 different proteins and 1 molecule of RNA (18S). The 60S subunit contains about 49 different proteins and 3 molecules of RNA (28S, 5.8S and 5S). Interacts with RPS21. Interacts with several laminins including at least LAMB1. Interacts with MDK. The mature dimeric form interacts with PPP1R16B (via its fourth ankyrin repeat). Interacts with PPP1CA only in the presence of PPP1R16B. Acylated. Acylation may be a prerequisite for conversion of the monomeric 37 kDa laminin receptor precursor (37LRP) to the mature dimeric 67 kDa laminin receptor (67LR), and may provide a mechanism for membrane association. In terms of processing, cleaved by stromelysin-3 (ST3) at the cell surface. Cleavage by stromelysin-3 may be a mechanism to alter cell-extracellular matrix interactions.

The protein localises to the cell membrane. The protein resides in the cytoplasm. Its subcellular location is the nucleus. Required for the assembly and/or stability of the 40S ribosomal subunit. Required for the processing of the 20S rRNA-precursor to mature 18S rRNA in a late step of the maturation of 40S ribosomal subunits. Also functions as a cell surface receptor for laminin. Plays a role in cell adhesion to the basement membrane and in the consequent activation of signaling transduction pathways. May play a role in cell fate determination and tissue morphogenesis. Also acts as a receptor for several other ligands, including the pathogenic prion protein, viruses, and bacteria. Acts as a PPP1R16B-dependent substrate of PPP1CA. In Sus scrofa (Pig), this protein is Small ribosomal subunit protein uS2.